The primary structure comprises 237 residues: MKKQNIPEEILSLLTEEEINMFQELQIKIKELNNKTNITRLTDGDDYWVSQVFDSIWPFKAFTNINFDNKKFLDIGSGCGFPGLAYAITHPNSEIYLIDSLKKKTDAIKILVEKINFKNNIHVINDRIENLAHHSSMRNNFNIATTRAVSNPSTVSEYILPMLKKEGFGVLYCGKWTNEESKNLDKTLEILEGKVKDKKEILLPRNKGTRNIILIQQKRLCPEIYPRKVGKPEKNPL.

S-adenosyl-L-methionine is bound by residues Gly-76, Phe-81, 128-129, and Arg-147; that span reads IE.

It belongs to the methyltransferase superfamily. RNA methyltransferase RsmG family.

The protein resides in the cytoplasm. Its function is as follows. Specifically methylates the N7 position of a guanine in 16S rRNA. In Prochlorococcus marinus (strain MIT 9301), this protein is Ribosomal RNA small subunit methyltransferase G.